A 244-amino-acid polypeptide reads, in one-letter code: Isoprenyl transferase (244 aa).

The active site involves D20. Residue D20 participates in Mg(2+) binding. Substrate-binding positions include 21–24, W25, R33, H37, and 65–67; these read GNGR and SSE. N68 serves as the catalytic Proton acceptor. Substrate contacts are provided by residues W69, R71, R188, and 194 to 196; that span reads RIS. A Mg(2+)-binding site is contributed by E207.

It belongs to the UPP synthase family. Homodimer. It depends on Mg(2+) as a cofactor.

Functionally, catalyzes the condensation of isopentenyl diphosphate (IPP) with allylic pyrophosphates generating different type of terpenoids. The protein is Isoprenyl transferase of Rhodopirellula baltica (strain DSM 10527 / NCIMB 13988 / SH1).